A 94-amino-acid polypeptide reads, in one-letter code: DNA-directed RNA polymerase subunit omega (94 aa).

It belongs to the RNA polymerase subunit omega family. Consists of a sigma factor and the RNAP core enzyme which is composed of 2 alpha chains, 1 beta chain, 1 beta' chain and 1 subunit omega.

The enzyme catalyses RNA(n) + a ribonucleoside 5'-triphosphate = RNA(n+1) + diphosphate. Functionally, promotes RNA polymerase assembly. Latches the N- and C-terminal regions of the beta' subunit thereby facilitating its interaction with the beta and alpha subunits. The sequence is that of DNA-directed RNA polymerase subunit omega from Shewanella violacea (strain JCM 10179 / CIP 106290 / LMG 19151 / DSS12).